The chain runs to 513 residues: GMP synthase [glutamine-hydrolyzing] (513 aa).

The Glutamine amidotransferase type-1 domain occupies 8–198; that stretch reads MILVLDFGSQ…VFGVCDCDGK (191 aa). Catalysis depends on C85, which acts as the Nucleophile. Active-site residues include H172 and E174. The 190-residue stretch at 199–388 folds into the GMPS ATP-PPase domain; the sequence is WSMENFIEIE…LGIPDDIVWR (190 aa). 226-232 is a binding site for ATP; it reads SGGVDSS.

Homodimer.

It catalyses the reaction XMP + L-glutamine + ATP + H2O = GMP + L-glutamate + AMP + diphosphate + 2 H(+). The protein operates within purine metabolism; GMP biosynthesis; GMP from XMP (L-Gln route): step 1/1. Functionally, catalyzes the synthesis of GMP from XMP. This chain is GMP synthase [glutamine-hydrolyzing], found in Bacillus pumilus (strain SAFR-032).